Consider the following 597-residue polypeptide: Fructan 1-exohydrolase (597 aa).

An N-terminal signal peptide occupies residues 1 to 15; it reads MAQAWAFLLPVLVFG. Residue Asp76 is part of the active site. Asn169, Asn237, and Asn249 each carry an N-linked (GlcNAc...) asparagine glycan. A disulfide bridge connects residues Cys447 and Cys493. An N-linked (GlcNAc...) asparagine glycan is attached at Asn568.

Belongs to the glycosyl hydrolase 32 family.

The enzyme catalyses Hydrolysis of terminal, non-reducing (2-&gt;1)-linked beta-D-fructofuranose residues in fructans.. With respect to regulation, inhibited by sucrose. Hydrolyzes inulin-type beta-(2,1)-fructans. May play a role as a beta-(2,1)-trimmer during graminan biosynthesis. This chain is Fructan 1-exohydrolase, found in Triticum urartu (Red wild einkorn).